The chain runs to 156 residues: Small ribosomal subunit protein uS7 (156 aa).

This sequence belongs to the universal ribosomal protein uS7 family. In terms of assembly, part of the 30S ribosomal subunit. Contacts proteins S9 and S11.

In terms of biological role, one of the primary rRNA binding proteins, it binds directly to 16S rRNA where it nucleates assembly of the head domain of the 30S subunit. Is located at the subunit interface close to the decoding center, probably blocks exit of the E-site tRNA. This chain is Small ribosomal subunit protein uS7, found in Coprothermobacter proteolyticus (strain ATCC 35245 / DSM 5265 / OCM 4 / BT).